Here is a 432-residue protein sequence, read N- to C-terminus: Glutamyl-tRNA reductase (432 aa).

Residues 49 to 52, Ser-101, 106 to 108, and Gln-112 contribute to the substrate site; these read TCNR and ESQ. Cys-50 (nucleophile) is an active-site residue. 181-186 contributes to the NADP(+) binding site; the sequence is GTGETI.

Belongs to the glutamyl-tRNA reductase family. In terms of assembly, homodimer.

The catalysed reaction is (S)-4-amino-5-oxopentanoate + tRNA(Glu) + NADP(+) = L-glutamyl-tRNA(Glu) + NADPH + H(+). It functions in the pathway porphyrin-containing compound metabolism; protoporphyrin-IX biosynthesis; 5-aminolevulinate from L-glutamyl-tRNA(Glu): step 1/2. Functionally, catalyzes the NADPH-dependent reduction of glutamyl-tRNA(Glu) to glutamate 1-semialdehyde (GSA). This is Glutamyl-tRNA reductase from Xylella fastidiosa (strain M12).